The chain runs to 255 residues: 5'-nucleotidase SurE (255 aa).

The a divalent metal cation site is built by aspartate 7, aspartate 8, serine 38, and asparagine 90.

This sequence belongs to the SurE nucleotidase family. Requires a divalent metal cation as cofactor.

It is found in the cytoplasm. It catalyses the reaction a ribonucleoside 5'-phosphate + H2O = a ribonucleoside + phosphate. Its function is as follows. Nucleotidase that shows phosphatase activity on nucleoside 5'-monophosphates. The protein is 5'-nucleotidase SurE of Picrophilus torridus (strain ATCC 700027 / DSM 9790 / JCM 10055 / NBRC 100828 / KAW 2/3).